A 475-amino-acid chain; its full sequence is Ornithine aminotransferase, mitochondrial (475 aa).

The transit peptide at 1–16 directs the protein to the mitochondrion; it reads MAATTRRLLYYVSKRF. The tract at residues 23–43 is disordered; that stretch reads RSYGGLPQSNSKSPPSSSQRL. Positions 29 to 41 are enriched in low complexity; sequence PQSNSKSPPSSSQ. Pyridoxal 5'-phosphate-binding positions include 142-143 and F177; that span reads GA. L-ornithine is bound at residue R180. 265–268 is a binding site for pyridoxal 5'-phosphate; that stretch reads DEVQ. An N6-(pyridoxal phosphate)lysine modification is found at K294. S323 serves as a coordination point for L-ornithine. T324 lines the pyridoxal 5'-phosphate pocket.

The protein belongs to the class-III pyridoxal-phosphate-dependent aminotransferase family. Homotetramer. The cofactor is pyridoxal 5'-phosphate.

The protein resides in the mitochondrion matrix. It catalyses the reaction a 2-oxocarboxylate + L-ornithine = L-glutamate 5-semialdehyde + an L-alpha-amino acid. The protein operates within amino-acid biosynthesis; L-proline biosynthesis; L-glutamate 5-semialdehyde from L-ornithine: step 1/1. Mediates degradation of arginine for nitrogen recycling. Plays a role in non-host disease resistance by regulating pyrroline-5-carboxylate metabolism-induced hypersensitive response. This chain is Ornithine aminotransferase, mitochondrial, found in Arabidopsis thaliana (Mouse-ear cress).